Here is a 383-residue protein sequence, read N- to C-terminus: Lipid-A-disaccharide synthase (383 aa).

It belongs to the LpxB family.

It carries out the reaction a lipid X + a UDP-2-N,3-O-bis[(3R)-3-hydroxyacyl]-alpha-D-glucosamine = a lipid A disaccharide + UDP + H(+). The protein operates within bacterial outer membrane biogenesis; LPS lipid A biosynthesis. Its function is as follows. Condensation of UDP-2,3-diacylglucosamine and 2,3-diacylglucosamine-1-phosphate to form lipid A disaccharide, a precursor of lipid A, a phosphorylated glycolipid that anchors the lipopolysaccharide to the outer membrane of the cell. The polypeptide is Lipid-A-disaccharide synthase (Anaeromyxobacter dehalogenans (strain 2CP-1 / ATCC BAA-258)).